A 157-amino-acid chain; its full sequence is Crossover junction endodeoxyribonuclease RuvC (157 aa).

Residues D7, E67, and D140 contribute to the active site. D7, E67, and D140 together coordinate Mg(2+).

It belongs to the RuvC family. As to quaternary structure, homodimer which binds Holliday junction (HJ) DNA. The HJ becomes 2-fold symmetrical on binding to RuvC with unstacked arms; it has a different conformation from HJ DNA in complex with RuvA. In the full resolvosome a probable DNA-RuvA(4)-RuvB(12)-RuvC(2) complex forms which resolves the HJ. The cofactor is Mg(2+).

It is found in the cytoplasm. It catalyses the reaction Endonucleolytic cleavage at a junction such as a reciprocal single-stranded crossover between two homologous DNA duplexes (Holliday junction).. In terms of biological role, the RuvA-RuvB-RuvC complex processes Holliday junction (HJ) DNA during genetic recombination and DNA repair. Endonuclease that resolves HJ intermediates. Cleaves cruciform DNA by making single-stranded nicks across the HJ at symmetrical positions within the homologous arms, yielding a 5'-phosphate and a 3'-hydroxyl group; requires a central core of homology in the junction. The consensus cleavage sequence is 5'-(A/T)TT(C/G)-3'. Cleavage occurs on the 3'-side of the TT dinucleotide at the point of strand exchange. HJ branch migration catalyzed by RuvA-RuvB allows RuvC to scan DNA until it finds its consensus sequence, where it cleaves and resolves the cruciform DNA. This Rickettsia bellii (strain OSU 85-389) protein is Crossover junction endodeoxyribonuclease RuvC.